The primary structure comprises 908 residues: PTS system glucose-specific EIICBA component (908 aa).

The region spanning 1–264 (MQISLVKIRN…YAPLWYTSAG (264 aa)) is the PTS EIIC type-1; first part domain. 5 helical membrane passes run 31-51 (LMIPIAVLPLAGIFLGIGDAI), 71-91 (GGNVVFANLPILFAVAIAITF), 100-120 (FSAFVFWATMNAFMSSLIIPV), 155-175 (VFGGIIVGALTAYLYNKFYAI), and 189-209 (FVPIICMTIAIPVALLLLMVW). The interval 265–450 (GSLQEIANQQ…VSQFTVAVPS (186 aa)) is unknown. The PTS EIIC type-1; second part domain maps to 451-602 (LNPAQYSQGK…FNLATPGRGG (152 aa)). 5 helical membrane passes run 459-479 (GKFPFMLIGIPAAGLAMILAA), 487-507 (ASSIIGSAAFTSFLTGITEPF), 509-529 (FTFLFLAPWLFYGIHAVLAAV), 536-556 (LLSANVGQTFSGSFIDFILYG), and 571-591 (VPIIGIFLALIYFPTFYFLTI). The PTS EIIB type-1 domain occupies 631 to 713 (QIEAGMLLRA…QDIIQGKVNW (83 aa)). The active-site Phosphocysteine intermediate; for EIIB activity is cysteine 653. The PTS EIIA type-1 domain occupies 762 to 875 (DDTFKNRLVG…DPITPFIVMQ (114 aa)). The Tele-phosphohistidine intermediate; for EIIA activity role is filled by histidine 815.

It localises to the cell membrane. It carries out the reaction N(pros)-phospho-L-histidyl-[protein] + D-glucose(out) = D-glucose 6-phosphate(in) + L-histidyl-[protein]. The phosphoenolpyruvate-dependent sugar phosphotransferase system (sugar PTS), a major carbohydrate active transport system, catalyzes the phosphorylation of incoming sugar substrates concomitantly with their translocation across the cell membrane. This system is involved in glucose transport. The sequence is that of PTS system glucose-specific EIICBA component (ptsG) from Mycoplasma genitalium (strain ATCC 33530 / DSM 19775 / NCTC 10195 / G37) (Mycoplasmoides genitalium).